The following is a 338-amino-acid chain: Penicillin V acylase (338 aa).

Positions 1 to 3 (MLG) are cleaved as a propeptide — removed in mature form. Cys4 functions as the Nucleophile in the catalytic mechanism.

It belongs to the peptidase C59 family. Homotetramer. Post-translationally, expressed as an inactive precursor that is cleaved autocatalytically at Gly-3/Cys-4 to generate an active enzyme. Processing exposes a catalytic N-terminal nucleophile residue with a free alpha amino group.

The enzyme catalyses a penicillin + H2O = 6-aminopenicillanate + a carboxylate. Its activity is regulated as follows. Hydrolase activity is rapidly inhibited by lysine modifying reagents. In terms of biological role, catalyzes the hydrolysis of penicillin V to 6-aminopenicillanate (6-APA). Exhibits high specificity for penicillin V. Penicillin G and other related compounds are hydrolyzed at less than 10% of the rate of penicillin V. Among the cephalosporins, cephalosporin C is resistant to cleavage, whereas cephalosporin G is cleaved at about 1% of the rate of cleavage of penicillin V. This chain is Penicillin V acylase, found in Lysinibacillus sphaericus (Bacillus sphaericus).